The sequence spans 424 residues: Arginine biosynthesis bifunctional protein ArgJ (424 aa).

Substrate is bound by residues Thr-166, Lys-192, Thr-203, Glu-290, Asn-419, and Thr-424. Thr-203 acts as the Nucleophile in catalysis.

This sequence belongs to the ArgJ family. In terms of assembly, heterotetramer of two alpha and two beta chains.

Its subcellular location is the cytoplasm. The enzyme catalyses N(2)-acetyl-L-ornithine + L-glutamate = N-acetyl-L-glutamate + L-ornithine. The catalysed reaction is L-glutamate + acetyl-CoA = N-acetyl-L-glutamate + CoA + H(+). Its pathway is amino-acid biosynthesis; L-arginine biosynthesis; L-ornithine and N-acetyl-L-glutamate from L-glutamate and N(2)-acetyl-L-ornithine (cyclic): step 1/1. The protein operates within amino-acid biosynthesis; L-arginine biosynthesis; N(2)-acetyl-L-ornithine from L-glutamate: step 1/4. Catalyzes two activities which are involved in the cyclic version of arginine biosynthesis: the synthesis of N-acetylglutamate from glutamate and acetyl-CoA as the acetyl donor, and of ornithine by transacetylation between N(2)-acetylornithine and glutamate. In Colwellia psychrerythraea (strain 34H / ATCC BAA-681) (Vibrio psychroerythus), this protein is Arginine biosynthesis bifunctional protein ArgJ.